The chain runs to 252 residues: UPF0246 protein FP0718 (252 aa).

This sequence belongs to the UPF0246 family.

In Flavobacterium psychrophilum (strain ATCC 49511 / DSM 21280 / CIP 103535 / JIP02/86), this protein is UPF0246 protein FP0718.